Here is a 494-residue protein sequence, read N- to C-terminus: NADH-quinone oxidoreductase subunit N 2 (494 aa).

14 helical membrane-spanning segments follow: residues 14-34, 45-65, 82-102, 116-136, 139-159, 174-194, 214-234, 262-282, 289-309, 317-337, 344-364, 388-408, 422-442, and 470-490; these read LPQI…GMLL, IAML…PLTA, VVQV…GSVL, IGEF…LVST, LLLI…LTAF, FLFG…LYGV, LLVA…AAPF, FFVF…NAAW, WMPI…LAAL, LLAY…IAHT, LLYY…VLAI, ACLL…GFFA, AFGL…ALFY, and ITLL…NLLM.

The protein belongs to the complex I subunit 2 family. In terms of assembly, NDH-1 is composed of 14 different subunits. Subunits NuoA, H, J, K, L, M, N constitute the membrane sector of the complex.

The protein localises to the cell inner membrane. The enzyme catalyses a quinone + NADH + 5 H(+)(in) = a quinol + NAD(+) + 4 H(+)(out). Its function is as follows. NDH-1 shuttles electrons from NADH, via FMN and iron-sulfur (Fe-S) centers, to quinones in the respiratory chain. The immediate electron acceptor for the enzyme in this species is believed to be ubiquinone. Couples the redox reaction to proton translocation (for every two electrons transferred, four hydrogen ions are translocated across the cytoplasmic membrane), and thus conserves the redox energy in a proton gradient. The polypeptide is NADH-quinone oxidoreductase subunit N 2 (Acidobacterium capsulatum (strain ATCC 51196 / DSM 11244 / BCRC 80197 / JCM 7670 / NBRC 15755 / NCIMB 13165 / 161)).